The chain runs to 440 residues: 5-hydroxytryptamine receptor 6 (440 aa).

At 1–27 the chain is on the extracellular side; that stretch reads MVPEPGPSANSTPAWGAGPPSAPGGSG. The helical transmembrane segment at 28 to 52 threads the bilayer; it reads WVAAALCVVIALTAAANSLLIALIC. Topologically, residues 53-62 are cytoplasmic; the sequence is TQPALRNTSN. A helical membrane pass occupies residues 63-88; sequence FFLVSLFTSDLMVGLVVMPPAMLNAL. Residues 89-96 lie on the Extracellular side of the membrane; that stretch reads YGRWVLAR. A helical transmembrane segment spans residues 97–122; the sequence is GLCLLWTAFDVMCCSASILNLCLISL. A disulfide bridge links C99 with C180. Position 106 (D106) interacts with serotonin. The Cytoplasmic portion of the chain corresponds to 123-142; sequence DRYLLILSPLRYKLRMTPPR. A helical transmembrane segment spans residues 143 to 167; sequence ALALVLGAWSLAALASFLPLLLGWH. Residues 168–185 are Extracellular-facing; it reads ELGHARPPVPGQCRLLAS. The helical transmembrane segment at 186–209 threads the bilayer; that stretch reads LPFVLVASGLTFFLPSGAICFTYC. The Cytoplasmic segment spans residues 210 to 266; that stretch reads RILLAARKQAVQVASLTTGMASQASETLQVPRTPRPGVESADSRRLATKHSRKALKA. Residues 267 to 293 form a helical membrane-spanning segment; that stretch reads SLTLGILLGMFFVTWLPFFVANIVQAV. N288 serves as a coordination point for serotonin. Topologically, residues 294–299 are extracellular; sequence CDCISP. A helical membrane pass occupies residues 300–323; that stretch reads GLFDVLTWLGYCNSTMNPIIYPLF. The Cytoplasmic portion of the chain corresponds to 324–440; it reads MRDFKRALGR…RPHPLGIPTN (117 aa). The tract at residues 346–392 is disordered; it reads ASLASPSLRTSHSGPRPGLSLQQVLPLPLPPDSDSDSDAGSGGSSGL. Polar residues predominate over residues 347–358; that stretch reads SLASPSLRTSHS. Residues 362–371 show a composition bias toward low complexity; the sequence is PGLSLQQVLP.

Belongs to the G-protein coupled receptor 1 family. In terms of assembly, interacts with MTOR, RPTOR and NF1. Interacts with CDK5.

The protein resides in the cell membrane. Its function is as follows. G-protein coupled receptor for 5-hydroxytryptamine (serotonin), a biogenic hormone that functions as a neurotransmitter, a hormone and a mitogen. Also has a high affinity for tricyclic psychotropic drugs. Ligand binding causes a conformation change that triggers signaling via guanine nucleotide-binding proteins (G proteins) and modulates the activity of downstream effectors. HTR6 is coupled to G(s) G alpha proteins and mediates activation of adenylate cyclase activity. Controls pyramidal neurons migration during corticogenesis, through the regulation of CDK5 activity. Is an activator of mTOR signaling. The sequence is that of 5-hydroxytryptamine receptor 6 (HTR6) from Pan troglodytes (Chimpanzee).